The chain runs to 175 residues: Small ribosomal subunit protein mS38 (175 aa).

The protein belongs to the mitochondrion-specific ribosomal protein mS38 family. Component of the mitochondrial small ribosomal subunit (mt-SSU). Mature yeast 74S mitochondrial ribosomes consist of a small (37S) and a large (54S) subunit. The 37S small subunit contains a 15S ribosomal RNA (15S mt-rRNA) and at least 32 different proteins. The 54S large subunit contains a 21S rRNA (21S mt-rRNA) and at least 45 different proteins.

The protein localises to the mitochondrion. It localises to the mitochondrion inner membrane. Component of the mitochondrial ribosome (mitoribosome), a dedicated translation machinery responsible for the synthesis of mitochondrial genome-encoded proteins, including at least some of the essential transmembrane subunits of the mitochondrial respiratory chain. The mitoribosomes are attached to the mitochondrial inner membrane and translation products are cotranslationally integrated into the membrane. mS38 is also involved in the splicing of the COX1 mRNA. The polypeptide is Small ribosomal subunit protein mS38 (cox24) (Schizosaccharomyces pombe (strain 972 / ATCC 24843) (Fission yeast)).